The following is a 290-amino-acid chain: Putative phosphoenolpyruvate synthase regulatory protein (290 aa).

170–177 (GVSRCGKT) serves as a coordination point for ADP.

The protein belongs to the pyruvate, phosphate/water dikinase regulatory protein family. PSRP subfamily.

The catalysed reaction is [pyruvate, water dikinase] + ADP = [pyruvate, water dikinase]-phosphate + AMP + H(+). It carries out the reaction [pyruvate, water dikinase]-phosphate + phosphate + H(+) = [pyruvate, water dikinase] + diphosphate. Its function is as follows. Bifunctional serine/threonine kinase and phosphorylase involved in the regulation of the phosphoenolpyruvate synthase (PEPS) by catalyzing its phosphorylation/dephosphorylation. The chain is Putative phosphoenolpyruvate synthase regulatory protein (ydiA) from Enterobacter agglomerans (Erwinia herbicola).